Reading from the N-terminus, the 285-residue chain is Acetyl-coenzyme A carboxylase carboxyl transferase subunit beta (285 aa).

The 257-residue stretch at Ile29–Asn285 folds into the CoA carboxyltransferase N-terminal domain. Zn(2+) is bound by residues Cys33, Cys36, Cys52, and Cys55. The segment at Cys33–Cys55 adopts a C4-type zinc-finger fold.

Belongs to the AccD/PCCB family. In terms of assembly, acetyl-CoA carboxylase is a heterohexamer composed of biotin carboxyl carrier protein (AccB), biotin carboxylase (AccC) and two subunits each of ACCase subunit alpha (AccA) and ACCase subunit beta (AccD). Requires Zn(2+) as cofactor.

It localises to the cytoplasm. The enzyme catalyses N(6)-carboxybiotinyl-L-lysyl-[protein] + acetyl-CoA = N(6)-biotinyl-L-lysyl-[protein] + malonyl-CoA. It participates in lipid metabolism; malonyl-CoA biosynthesis; malonyl-CoA from acetyl-CoA: step 1/1. Functionally, component of the acetyl coenzyme A carboxylase (ACC) complex. Biotin carboxylase (BC) catalyzes the carboxylation of biotin on its carrier protein (BCCP) and then the CO(2) group is transferred by the transcarboxylase to acetyl-CoA to form malonyl-CoA. In Staphylococcus epidermidis (strain ATCC 35984 / DSM 28319 / BCRC 17069 / CCUG 31568 / BM 3577 / RP62A), this protein is Acetyl-coenzyme A carboxylase carboxyl transferase subunit beta.